Reading from the N-terminus, the 593-residue chain is Mitoguardin 2 (593 aa).

Helical transmembrane passes span 11–31 (MIQA…TTFG) and 42–62 (PGLR…ALAA). Disordered regions lie at residues 98–134 (PSVK…HSGS), 150–171 (TAAC…TTDG), and 197–229 (VGQR…PESQ). Low complexity-rich tracts occupy residues 106–116 (SRRVQSPSSKS) and 124–134 (SSIEPSKHSGS). Ser132 is subject to Phosphoserine. Residues 205–218 (STPTPGDSLQNPDT) show a composition bias toward polar residues. Residue Thr206 is modified to Phosphothreonine. Ser220, Ser224, and Ser228 each carry phosphoserine. Thr273 carries the phosphothreonine modification. Ser276 and Ser295 each carry phosphoserine. The FFAT signature appears at 292-298 (SFFSATE).

The protein belongs to the mitoguardin family. In terms of assembly, homodimer and heterodimer; forms heterodimers with MIGA1. Interacts with PLD6/MitoPLD. Interacts (via phosphorylated FFAT motif) with MOSPD2. In terms of processing, phosphorylation at Ser-295 of the FFAT motif activates interaction with MOSPD2.

Its subcellular location is the mitochondrion outer membrane. Functionally, regulator of mitochondrial fusion. Acts by forming homo- and heterodimers at the mitochondrial outer membrane and facilitating the formation of PLD6/MitoPLD dimers. May act by regulating phospholipid metabolism via PLD6/MitoPLD. This chain is Mitoguardin 2, found in Mus musculus (Mouse).